The primary structure comprises 765 residues: Protein transport protein Sec23A (765 aa).

Zn(2+)-binding residues include Cys-61, Cys-66, Cys-85, and Cys-88. A Gelsolin-like repeat occupies 632 to 718 (PEPVLLDSSS…EHGGSQARFL (87 aa)).

This sequence belongs to the SEC23/SEC24 family. SEC23 subfamily. In terms of assembly, COPII is composed of at least five proteins: the Sec23/24 complex, the Sec13/31 complex and Sar1.

The protein localises to the cytoplasmic vesicle. It is found in the COPII-coated vesicle membrane. Its subcellular location is the endoplasmic reticulum membrane. It localises to the cytoplasm. The protein resides in the cytosol. Its function is as follows. Component of the coat protein complex II (COPII) which promotes the formation of transport vesicles from the endoplasmic reticulum (ER). The coat has two main functions, the physical deformation of the endoplasmic reticulum membrane into vesicles and the selection of cargo molecules for their transport to the Golgi complex. This is Protein transport protein Sec23A from Xenopus tropicalis (Western clawed frog).